Reading from the N-terminus, the 236-residue chain is Phosphoribosylaminoimidazole-succinocarboxamide synthase (236 aa).

This sequence belongs to the SAICAR synthetase family.

It catalyses the reaction 5-amino-1-(5-phospho-D-ribosyl)imidazole-4-carboxylate + L-aspartate + ATP = (2S)-2-[5-amino-1-(5-phospho-beta-D-ribosyl)imidazole-4-carboxamido]succinate + ADP + phosphate + 2 H(+). It functions in the pathway purine metabolism; IMP biosynthesis via de novo pathway; 5-amino-1-(5-phospho-D-ribosyl)imidazole-4-carboxamide from 5-amino-1-(5-phospho-D-ribosyl)imidazole-4-carboxylate: step 1/2. The protein is Phosphoribosylaminoimidazole-succinocarboxamide synthase (purC) of Lactococcus lactis subsp. lactis (strain IL1403) (Streptococcus lactis).